Reading from the N-terminus, the 398-residue chain is Acetate kinase (398 aa).

A Mg(2+)-binding site is contributed by asparagine 9. Residue lysine 16 participates in ATP binding. Arginine 90 provides a ligand contact to substrate. The Proton donor/acceptor role is filled by aspartate 147. ATP is bound by residues 207–211, 282–284, and 330–334; these read HIGNG, DLR, and GVGEN. Glutamate 384 contacts Mg(2+).

Belongs to the acetokinase family. As to quaternary structure, homodimer. Mg(2+) is required as a cofactor. The cofactor is Mn(2+).

Its subcellular location is the cytoplasm. The enzyme catalyses acetate + ATP = acetyl phosphate + ADP. Its pathway is metabolic intermediate biosynthesis; acetyl-CoA biosynthesis; acetyl-CoA from acetate: step 1/2. Functionally, catalyzes the formation of acetyl phosphate from acetate and ATP. Can also catalyze the reverse reaction. This Staphylococcus carnosus (strain TM300) protein is Acetate kinase.